A 418-amino-acid chain; its full sequence is cAMP-dependent protein kinase type II-beta regulatory subunit (418 aa).

The interval 2 to 153 (SIEIPAGLTE…RLQEACKDIL (152 aa)) is dimerization and phosphorylation. Residues 45–57 (RKGTARFGHEGRT) are compositionally biased toward basic and acidic residues. The tract at residues 45–98 (RKGTARFGHEGRTWGDAGAAGGGGTPSKGVNFAEEPRHSDSENGEEEEEEAADA) is disordered. At threonine 69 the chain carries Phosphothreonine. Phosphoserine is present on residues serine 83 and serine 85. Positions 86-96 (ENGEEEEEEAA) are enriched in acidic residues. Position 114 is a phosphoserine (serine 114). 3',5'-cyclic AMP is bound by residues 154-275 (LFKN…ESLP), glutamate 223, arginine 232, 276-418 (FLKS…EPTA), glutamate 352, and arginine 361.

Belongs to the cAMP-dependent kinase regulatory chain family. The inactive form of the enzyme is composed of two regulatory chains and two catalytic chains. Activation by cAMP produces two active catalytic monomers and a regulatory dimer that binds four cAMP molecules. Interacts with PRKACA and PRKACB. Interacts with the phosphorylated form of PJA2. Forms a complex composed of PRKAR2B, GSK3B and GSKIP through GSKIP interaction; facilitates PKA-induced phosphorylation and regulates GSK3B activity. Post-translationally, phosphorylated by the activated catalytic chain. In terms of tissue distribution, four types of regulatory chains are found: I-alpha, I-beta, II-alpha, and II-beta. Their expression varies among tissues and is in some cases constitutive and in others inducible.

It is found in the cytoplasm. It localises to the cell membrane. Its function is as follows. Regulatory subunit of the cAMP-dependent protein kinases involved in cAMP signaling in cells. Type II regulatory chains mediate membrane association by binding to anchoring proteins, including the MAP2 kinase. This Bos taurus (Bovine) protein is cAMP-dependent protein kinase type II-beta regulatory subunit (PRKAR2B).